Consider the following 211-residue polypeptide: Major fimbrial subunit (211 aa).

Residues 1–20 (MKKTLLGSLILLAFAGNVQA) form the signal peptide. Cys43 and Cys83 are disulfide-bonded.

It belongs to the fimbrial protein family.

It is found in the fimbrium. In terms of biological role, mediates adherence to oropharyngeal epithelial cells. Helps the airway colonization process. The sequence is that of Major fimbrial subunit (hifA) from Haemophilus influenzae.